The following is a 490-amino-acid chain: MRIAILGRPNVGKSSIFNRLCKRSLAIVNAQEGTTRDRLYGEIRAWDSIVHVIDTGGVDQESTDRFQKQIHKQALAAAEEASVLLLVVDIRCGITKQDEELAKRLLPLKKPLILVMNKADSQQDLQRIHEFYGLGISNMIATSASHDKHIDVLLERIRQVAEIPLPSAEEQENTQEEEFSSKESSVALHTFADETLFENESLSQEEASFLEELVAQTTTPSISNRPLKVALIGHPNVGKSSIVNALLKEERCITDNSPGTTRDNVDVSYTYNDKEYVFIDTAGLRKAKSIKNSVEWMSSSRTEKAISRADICLLVIDATQQLSYQDKRILSLIARYKKPHVILVNKWDLMFGVRMEHYVQDLRKMDPYIGQARILCISAKQRRNLSQIFSAVDDVYTIATTKLSTSLVNKVLAGAMQRHHPQVINGKRLRIYYAIHKTVTPFSFLLFINSNTLLTKPYELYLKNTLKAAFNLYGIPFDLEYKAKPARKSN.

The EngA-type G 1 domain maps to 1–165 (MRIAILGRPN…RIRQVAEIPL (165 aa)). Residues 7–14 (GRPNVGKS), 54–58 (DTGGV), and 117–120 (NKAD) each bind GTP. The segment at 165–184 (LPSAEEQENTQEEEFSSKES) is disordered. The segment covering 169 to 178 (EEQENTQEEE) has biased composition (acidic residues). One can recognise an EngA-type G 2 domain in the interval 227 to 400 (LKVALIGHPN…AVDDVYTIAT (174 aa)). GTP-binding positions include 233 to 240 (GHPNVGKS), 280 to 284 (DTAGL), and 345 to 348 (NKWD). In terms of domain architecture, KH-like spans 401–485 (TKLSTSLVNK…PFDLEYKAKP (85 aa)).

It belongs to the TRAFAC class TrmE-Era-EngA-EngB-Septin-like GTPase superfamily. EngA (Der) GTPase family. Associates with the 50S ribosomal subunit.

Functionally, GTPase that plays an essential role in the late steps of ribosome biogenesis. The chain is GTPase Der from Chlamydia muridarum (strain MoPn / Nigg).